The chain runs to 59 residues: Large ribosomal subunit protein bL33 (59 aa).

Residues 26 to 59 are disordered; that stretch reads RYTTTKNKKNNTERLVLKKYNPNLKKHTEHKEIK.

It belongs to the bacterial ribosomal protein bL33 family.

This Chlorobium phaeobacteroides (strain BS1) protein is Large ribosomal subunit protein bL33.